Reading from the N-terminus, the 74-residue chain is Mitochondrial import receptor subunit TOM6 homolog (74 aa).

Residues 1-20 (MASSGVTVSAAGSASEASEV) show a composition bias toward low complexity. The disordered stretch occupies residues 1 to 21 (MASSGVTVSAAGSASEASEVP). An N-acetylalanine modification is found at alanine 2.

It belongs to the Tom6 family. As to quaternary structure, forms part of the preprotein translocase complex of the outer mitochondrial membrane (TOM complex) which consists of at least 7 different proteins (TOMM5, TOMM6, TOMM7, TOMM20, TOMM22, TOMM40 and TOMM70).

It is found in the mitochondrion outer membrane. This Mus musculus (Mouse) protein is Mitochondrial import receptor subunit TOM6 homolog (Tomm6).